A 505-amino-acid polypeptide reads, in one-letter code: Maturase K (505 aa).

It belongs to the intron maturase 2 family. MatK subfamily.

Its subcellular location is the plastid. It localises to the chloroplast. In terms of biological role, usually encoded in the trnK tRNA gene intron. Probably assists in splicing its own and other chloroplast group II introns. This Apocynum androsaemifolium (Spreading dogbane) protein is Maturase K.